We begin with the raw amino-acid sequence, 370 residues long: Holliday junction branch migration complex subunit RuvB (370 aa).

Positions 1–182 (MDERMMTSAK…FGVIHRLEYY (182 aa)) are large ATPase domain (RuvB-L). Residues Leu-21, Arg-22, Gly-63, Lys-66, Thr-67, Thr-68, 129-131 (EDF), Arg-172, Tyr-182, and Arg-219 contribute to the ATP site. Thr-67 contributes to the Mg(2+) binding site. The interval 183-253 (RPDELEFIIL…VAREALRRLE (71 aa)) is small ATPAse domain (RuvB-S). A head domain (RuvB-H) region spans residues 256 to 370 (PRGLDTTDQR…AEQAALSFDE (115 aa)). DNA-binding residues include Arg-311 and Arg-316.

Belongs to the RuvB family. As to quaternary structure, homohexamer. Forms an RuvA(8)-RuvB(12)-Holliday junction (HJ) complex. HJ DNA is sandwiched between 2 RuvA tetramers; dsDNA enters through RuvA and exits via RuvB. An RuvB hexamer assembles on each DNA strand where it exits the tetramer. Each RuvB hexamer is contacted by two RuvA subunits (via domain III) on 2 adjacent RuvB subunits; this complex drives branch migration. In the full resolvosome a probable DNA-RuvA(4)-RuvB(12)-RuvC(2) complex forms which resolves the HJ.

The protein localises to the cytoplasm. It catalyses the reaction ATP + H2O = ADP + phosphate + H(+). Its function is as follows. The RuvA-RuvB-RuvC complex processes Holliday junction (HJ) DNA during genetic recombination and DNA repair, while the RuvA-RuvB complex plays an important role in the rescue of blocked DNA replication forks via replication fork reversal (RFR). RuvA specifically binds to HJ cruciform DNA, conferring on it an open structure. The RuvB hexamer acts as an ATP-dependent pump, pulling dsDNA into and through the RuvAB complex. RuvB forms 2 homohexamers on either side of HJ DNA bound by 1 or 2 RuvA tetramers; 4 subunits per hexamer contact DNA at a time. Coordinated motions by a converter formed by DNA-disengaged RuvB subunits stimulates ATP hydrolysis and nucleotide exchange. Immobilization of the converter enables RuvB to convert the ATP-contained energy into a lever motion, pulling 2 nucleotides of DNA out of the RuvA tetramer per ATP hydrolyzed, thus driving DNA branch migration. The RuvB motors rotate together with the DNA substrate, which together with the progressing nucleotide cycle form the mechanistic basis for DNA recombination by continuous HJ branch migration. Branch migration allows RuvC to scan DNA until it finds its consensus sequence, where it cleaves and resolves cruciform DNA. In Heliobacterium modesticaldum (strain ATCC 51547 / Ice1), this protein is Holliday junction branch migration complex subunit RuvB.